A 232-amino-acid polypeptide reads, in one-letter code: Large ribosomal subunit protein uL1 (232 aa).

This sequence belongs to the universal ribosomal protein uL1 family. Part of the 50S ribosomal subunit.

In terms of biological role, binds directly to 23S rRNA. The L1 stalk is quite mobile in the ribosome, and is involved in E site tRNA release. Protein L1 is also a translational repressor protein, it controls the translation of the L11 operon by binding to its mRNA. The sequence is that of Large ribosomal subunit protein uL1 from Bacteroides thetaiotaomicron (strain ATCC 29148 / DSM 2079 / JCM 5827 / CCUG 10774 / NCTC 10582 / VPI-5482 / E50).